The chain runs to 214 residues: Ras-like protein 2 (214 aa).

Residues 19–24 (GVGKSC), 35–41 (VDEYDPT), 65–66 (AG), 122–125 (NKCD), and 152–154 (SAK) contribute to the GTP site. The short motif at 38–46 (YDPTIEDSY) is the Effector region element. Residues 178 to 197 (QGYSTGSGGSNAGGPSNKME) are disordered. Cysteine methyl ester is present on C211. The S-farnesyl cysteine moiety is linked to residue C211. A propeptide spans 212–214 (VLM) (removed in mature form).

It belongs to the small GTPase superfamily. Ras family. As to quaternary structure, interacts with farnesyltransferase beta subunit RAM1.

It is found in the cell membrane. Alternates between an inactive form bound to GDP and an active form bound to GTP. Activated by a guanine nucleotide-exchange factor (GEF) and inactivated by a GTPase-activating protein (GAP). Functionally, modulates the activity of the adenylate cyclase catalytic subunit and therefore affects the biosynthesis of cyclic-AMP. Plays a role in both surface attachment and surface recognition of appressoria, a highly specialized infection structure for plant penetration. Regulates appressorium formation by coordinated regulation of cAMP signaling and Pmk1 MAPK pathways. This Pyricularia oryzae (strain 70-15 / ATCC MYA-4617 / FGSC 8958) (Rice blast fungus) protein is Ras-like protein 2.